The sequence spans 878 residues: Leucine--tRNA ligase (878 aa).

The 'HIGH' region signature appears at 43–53 (PYPSGRIHIGH). The short motif at 630 to 634 (KMSKS) is the 'KMSKS' region element. Lys633 serves as a coordination point for ATP.

It belongs to the class-I aminoacyl-tRNA synthetase family.

Its subcellular location is the cytoplasm. The enzyme catalyses tRNA(Leu) + L-leucine + ATP = L-leucyl-tRNA(Leu) + AMP + diphosphate. The chain is Leucine--tRNA ligase from Nitrobacter hamburgensis (strain DSM 10229 / NCIMB 13809 / X14).